The following is a 566-amino-acid chain: Oxygen-dependent choline dehydrogenase (566 aa).

7-36 serves as a coordination point for FAD; it reads DYIICGAGSAGNVLATRLTEDPNVTVLLLE. The interval 180-203 is disordered; the sequence is NGYQQEGFGPMDRTVTPKGRRAST. The active-site Proton acceptor is the H474.

Belongs to the GMC oxidoreductase family. It depends on FAD as a cofactor.

The enzyme catalyses choline + A = betaine aldehyde + AH2. It carries out the reaction betaine aldehyde + NAD(+) + H2O = glycine betaine + NADH + 2 H(+). The protein operates within amine and polyamine biosynthesis; betaine biosynthesis via choline pathway; betaine aldehyde from choline (cytochrome c reductase route): step 1/1. Functionally, involved in the biosynthesis of the osmoprotectant glycine betaine. Catalyzes the oxidation of choline to betaine aldehyde and betaine aldehyde to glycine betaine at the same rate. This Burkholderia ambifaria (strain MC40-6) protein is Oxygen-dependent choline dehydrogenase.